A 319-amino-acid polypeptide reads, in one-letter code: Cytochrome f (319 aa).

Positions 1 to 34 (MQNRNTYEWAKKMTRLISVLVMIHIITRTSISNA) are cleaved as a signal peptide. Heme-binding residues include tyrosine 35, cysteine 55, cysteine 58, and histidine 59. The chain crosses the membrane as a helical span at residues 287–304 (GLLLFLASVILAQIFLVL).

The protein belongs to the cytochrome f family. As to quaternary structure, the 4 large subunits of the cytochrome b6-f complex are cytochrome b6, subunit IV (17 kDa polypeptide, petD), cytochrome f and the Rieske protein, while the 4 small subunits are PetG, PetL, PetM and PetN. The complex functions as a dimer. The cofactor is heme.

It is found in the plastid. The protein resides in the chloroplast thylakoid membrane. Functionally, component of the cytochrome b6-f complex, which mediates electron transfer between photosystem II (PSII) and photosystem I (PSI), cyclic electron flow around PSI, and state transitions. In Pinus thunbergii (Japanese black pine), this protein is Cytochrome f (petA).